The following is a 255-amino-acid chain: Enolase-phosphatase E1 (255 aa).

Mg(2+) is bound by residues D22 and E24. Residues 136–137 (SS) and K173 contribute to the substrate site. D199 contacts Mg(2+).

It belongs to the HAD-like hydrolase superfamily. MasA/MtnC family. In terms of assembly, monomer. The cofactor is Mg(2+).

Its subcellular location is the cytoplasm. The protein resides in the nucleus. The catalysed reaction is 5-methylsulfanyl-2,3-dioxopentyl phosphate + H2O = 1,2-dihydroxy-5-(methylsulfanyl)pent-1-en-3-one + phosphate. The protein operates within amino-acid biosynthesis; L-methionine biosynthesis via salvage pathway; L-methionine from S-methyl-5-thio-alpha-D-ribose 1-phosphate: step 3/6. It functions in the pathway amino-acid biosynthesis; L-methionine biosynthesis via salvage pathway; L-methionine from S-methyl-5-thio-alpha-D-ribose 1-phosphate: step 4/6. In terms of biological role, bifunctional enzyme that catalyzes the enolization of 2,3-diketo-5-methylthiopentyl-1-phosphate (DK-MTP-1-P) into the intermediate 2-hydroxy-3-keto-5-methylthiopentenyl-1-phosphate (HK-MTPenyl-1-P), which is then dephosphorylated to form the acireductone 1,2-dihydroxy-3-keto-5-methylthiopentene (DHK-MTPene). The protein is Enolase-phosphatase E1 of Verticillium alfalfae (strain VaMs.102 / ATCC MYA-4576 / FGSC 10136) (Verticillium wilt of alfalfa).